A 760-amino-acid chain; its full sequence is 5-methyltetrahydropteroyltriglutamate--homocysteine methyltransferase (760 aa).

5-methyltetrahydropteroyltri-L-glutamate is bound by residues 17 to 20 (RELK) and Lys-118. Residues 436-438 (IGS) and Glu-489 each bind L-homocysteine. Residues 436–438 (IGS) and Glu-489 each bind L-methionine. 5-methyltetrahydropteroyltri-L-glutamate-binding positions include 520–521 (RC) and Trp-566. L-homocysteine is bound at residue Asp-604. Asp-604 is a binding site for L-methionine. A 5-methyltetrahydropteroyltri-L-glutamate-binding site is contributed by Glu-610. Residues His-646, Cys-648, and Glu-670 each contribute to the Zn(2+) site. His-699 (proton donor) is an active-site residue. Cys-731 contacts Zn(2+).

Belongs to the vitamin-B12 independent methionine synthase family. It depends on Zn(2+) as a cofactor.

The catalysed reaction is 5-methyltetrahydropteroyltri-L-glutamate + L-homocysteine = tetrahydropteroyltri-L-glutamate + L-methionine. It functions in the pathway amino-acid biosynthesis; L-methionine biosynthesis via de novo pathway; L-methionine from L-homocysteine (MetE route): step 1/1. In terms of biological role, catalyzes the transfer of a methyl group from 5-methyltetrahydrofolate to homocysteine resulting in methionine formation. This chain is 5-methyltetrahydropteroyltriglutamate--homocysteine methyltransferase, found in Vibrio parahaemolyticus serotype O3:K6 (strain RIMD 2210633).